A 62-amino-acid polypeptide reads, in one-letter code: Large ribosomal subunit protein eL37 (62 aa).

Residues cysteine 20, cysteine 23, cysteine 35, and cysteine 38 each coordinate Zn(2+). The C4-type zinc-finger motif lies at 20-38; the sequence is CRRCGRRSYHVRKKACSAC.

The protein belongs to the eukaryotic ribosomal protein eL37 family. Zn(2+) is required as a cofactor.

Its function is as follows. Binds to the 23S rRNA. In Methanococcus aeolicus (strain ATCC BAA-1280 / DSM 17508 / OCM 812 / Nankai-3), this protein is Large ribosomal subunit protein eL37.